A 134-amino-acid polypeptide reads, in one-letter code: Small ribosomal subunit protein uS11 (134 aa).

It belongs to the universal ribosomal protein uS11 family. In terms of assembly, part of the 30S ribosomal subunit. Interacts with proteins S7 and S18. Binds to IF-3.

Located on the platform of the 30S subunit, it bridges several disparate RNA helices of the 16S rRNA. Forms part of the Shine-Dalgarno cleft in the 70S ribosome. In Acidovorax ebreus (strain TPSY) (Diaphorobacter sp. (strain TPSY)), this protein is Small ribosomal subunit protein uS11.